A 295-amino-acid chain; its full sequence is Myosin light chain kinase A (295 aa).

One can recognise a Protein kinase domain in the interval 8–265; the sequence is YEFKEELGRG…ATNALNHPWL (258 aa). Residues 14 to 22 and Lys-37 contribute to the ATP site; that span reads LGRGAFSIV. Asp-130 serves as the catalytic Proton acceptor. 2 positions are modified to phosphothreonine: Thr-166 and Thr-289. The interval 264–295 is autoinhibitory domain; it reads WLKSNNSNNTIDTVKMKEYIVERQKTQTKLVN.

This sequence belongs to the protein kinase superfamily. CAMK Ser/Thr protein kinase family. CaMK subfamily. Autophosphorylated. Transiently phosphorylated on Thr-166 and Thr-289. This phosphorylation is gbpC-dependent.

The enzyme catalyses L-seryl-[myosin light chain] + ATP = O-phospho-L-seryl-[myosin light chain] + ADP + H(+). The catalysed reaction is L-threonyl-[myosin light chain] + ATP = O-phospho-L-threonyl-[myosin light chain] + ADP + H(+). Its activity is regulated as follows. Possesses an autoinhibitory domain. Autophosphorylation appears to increase the enzymatic activity. Activation is gbdC-dependent. Does not have a calmodulin-binding domain. In terms of biological role, phosphorylates a specific serine in the N-terminus of a myosin light chain. Phosphorylates regulatory myosin light chain (mlcR) during chemotaxis. mlcR phosphorylation increases the motility and actin-activated ATPase activity of myosin, contributing to chemotaxis. The polypeptide is Myosin light chain kinase A (mlkA) (Dictyostelium discoideum (Social amoeba)).